The following is a 348-amino-acid chain: Dihydroorotase (348 aa).

Positions 14 and 16 each coordinate Zn(2+). Substrate-binding positions include 16–18 (HLR) and asparagine 42. The Zn(2+) site is built by lysine 100, histidine 137, and histidine 175. Position 100 is an N6-carboxylysine (lysine 100). Substrate is bound at residue histidine 137. Leucine 220 provides a ligand contact to substrate. Aspartate 248 is a binding site for Zn(2+). Aspartate 248 is an active-site residue. The substrate site is built by histidine 252 and alanine 264.

This sequence belongs to the metallo-dependent hydrolases superfamily. DHOase family. Class II DHOase subfamily. In terms of assembly, homodimer. Zn(2+) is required as a cofactor.

It carries out the reaction (S)-dihydroorotate + H2O = N-carbamoyl-L-aspartate + H(+). It functions in the pathway pyrimidine metabolism; UMP biosynthesis via de novo pathway; (S)-dihydroorotate from bicarbonate: step 3/3. Catalyzes the reversible cyclization of carbamoyl aspartate to dihydroorotate. This is Dihydroorotase from Pseudomonas fluorescens (strain ATCC BAA-477 / NRRL B-23932 / Pf-5).